We begin with the raw amino-acid sequence, 221 residues long: Triosephosphate isomerase (221 aa).

8-10 (NLK) provides a ligand contact to substrate. Catalysis depends on His92, which acts as the Electrophile. The active-site Proton acceptor is the Glu140. Substrate is bound by residues Ile145, Gly180, and 201–202 (AS).

It belongs to the triosephosphate isomerase family. Homotetramer; dimer of dimers.

The protein localises to the cytoplasm. The catalysed reaction is D-glyceraldehyde 3-phosphate = dihydroxyacetone phosphate. It participates in carbohydrate biosynthesis; gluconeogenesis. It functions in the pathway carbohydrate degradation; glycolysis; D-glyceraldehyde 3-phosphate from glycerone phosphate: step 1/1. Functionally, involved in the gluconeogenesis. Catalyzes stereospecifically the conversion of dihydroxyacetone phosphate (DHAP) to D-glyceraldehyde-3-phosphate (G3P). This chain is Triosephosphate isomerase, found in Methanococcoides burtonii (strain DSM 6242 / NBRC 107633 / OCM 468 / ACE-M).